A 268-amino-acid polypeptide reads, in one-letter code: Tryptophan synthase alpha chain (268 aa).

Active-site proton acceptor residues include glutamate 49 and aspartate 60.

The protein belongs to the TrpA family. As to quaternary structure, tetramer of two alpha and two beta chains.

The catalysed reaction is (1S,2R)-1-C-(indol-3-yl)glycerol 3-phosphate + L-serine = D-glyceraldehyde 3-phosphate + L-tryptophan + H2O. It functions in the pathway amino-acid biosynthesis; L-tryptophan biosynthesis; L-tryptophan from chorismate: step 5/5. Functionally, the alpha subunit is responsible for the aldol cleavage of indoleglycerol phosphate to indole and glyceraldehyde 3-phosphate. The chain is Tryptophan synthase alpha chain from Sodalis glossinidius (strain morsitans).